Consider the following 223-residue polypeptide: GTP cyclohydrolase 1 (223 aa).

Zn(2+) is bound by residues Cys-114, His-117, and Cys-185.

The protein belongs to the GTP cyclohydrolase I family. As to quaternary structure, homomer.

It catalyses the reaction GTP + H2O = 7,8-dihydroneopterin 3'-triphosphate + formate + H(+). The protein operates within cofactor biosynthesis; 7,8-dihydroneopterin triphosphate biosynthesis; 7,8-dihydroneopterin triphosphate from GTP: step 1/1. This chain is GTP cyclohydrolase 1, found in Chlorobium chlorochromatii (strain CaD3).